The chain runs to 549 residues: Efflux pump patC (549 aa).

Residues 1 to 12 (MAESTAHTSPSL) show a composition bias toward polar residues. Positions 1 to 40 (MAESTAHTSPSLNDKEREVDQGILSDESGPAEEVKETPDQ) are disordered. A run of 14 helical transmembrane segments spans residues 50-70 (LLIC…NTIV), 85-105 (AQLG…ILPL), 116-136 (WLFI…GGAP), 146-166 (VWAG…ITIL), 178-198 (LVGL…GAFA), 206-226 (WGFY…VFLL), 252-272 (VLSA…GVMW), 282-302 (LYVV…FCVL), 321-341 (IALY…VYYI), 360-380 (LLPF…LMPK), 385-405 (VLWY…MYTV), 419-439 (ILLG…PSLV), 460-482 (LLGL…NALL), and 526-546 (VYVM…FLPW).

The protein belongs to the major facilitator superfamily. TCR/Tet family.

The protein resides in the vacuole membrane. Its subcellular location is the cell membrane. In terms of biological role, efflux pump; part of the gene cluster that mediates the biosynthesis of patulin, an acetate-derived tetraketide mycotoxin produced by several fungal species that shows antimicrobial properties against several bacteria. May be involved in the secretion of E-ascladiol to be converted to patulin by the secreted patulin synthase patE. This chain is Efflux pump patC, found in Aspergillus clavatus (strain ATCC 1007 / CBS 513.65 / DSM 816 / NCTC 3887 / NRRL 1 / QM 1276 / 107).